The primary structure comprises 322 residues: Cytochrome f (322 aa).

The signal sequence occupies residues 1 to 35; it reads MQTRNTFSWTWIREEITRSISVSLMIYIITWSSIS. 4 residues coordinate heme: Tyr38, Cys58, Cys61, and His62. The helical transmembrane segment at 288 to 308 threads the bilayer; that stretch reads VQGLLFFLGSVVLAQIFLVLK.

It belongs to the cytochrome f family. In terms of assembly, the 4 large subunits of the cytochrome b6-f complex are cytochrome b6, subunit IV (17 kDa polypeptide, petD), cytochrome f and the Rieske protein, while the 4 small subunits are PetG, PetL, PetM and PetN. The complex functions as a dimer. Heme serves as cofactor.

It is found in the plastid. It localises to the chloroplast thylakoid membrane. Functionally, component of the cytochrome b6-f complex, which mediates electron transfer between photosystem II (PSII) and photosystem I (PSI), cyclic electron flow around PSI, and state transitions. This is Cytochrome f from Aethionema cordifolium (Lebanon stonecress).